A 155-amino-acid polypeptide reads, in one-letter code: Biotin carboxyl carrier protein of acetyl-CoA carboxylase (155 aa).

Residues 72–155 form the Biotinyl-binding domain; it reads AASDELSGHL…EFDEPLIVIE (84 aa). Residue K121 is modified to N6-biotinyllysine.

Homodimer.

The protein operates within lipid metabolism; fatty acid biosynthesis. Its function is as follows. This protein is a component of the acetyl coenzyme A carboxylase complex; first, biotin carboxylase catalyzes the carboxylation of the carrier protein and then the transcarboxylase transfers the carboxyl group to form malonyl-CoA. This chain is Biotin carboxyl carrier protein of acetyl-CoA carboxylase (accB), found in Haemophilus influenzae (strain ATCC 51907 / DSM 11121 / KW20 / Rd).